The primary structure comprises 138 residues: Basic phospholipase A2 PL-Y (138 aa).

The signal sequence occupies residues 1-16 (MRTLWIMAVLLVGVEG). 7 disulfides stabilise this stretch: Cys42/Cys131, Cys44/Cys60, Cys59/Cys111, Cys65/Cys138, Cys66/Cys104, Cys73/Cys97, and Cys91/Cys102. Positions 43, 45, and 47 each coordinate Ca(2+). Residue His63 is part of the active site. Asp64 lines the Ca(2+) pocket. The active site involves Asp105.

It belongs to the phospholipase A2 family. Group II subfamily. D49 sub-subfamily. Ca(2+) serves as cofactor. As to expression, expressed by the venom gland.

The protein resides in the secreted. The enzyme catalyses a 1,2-diacyl-sn-glycero-3-phosphocholine + H2O = a 1-acyl-sn-glycero-3-phosphocholine + a fatty acid + H(+). Snake venom phospholipase A2 (PLA2) that can cleave arachidonate at the sn-2 position from phospholipides in the micellar state or in bilayer membranes. PLA2 catalyzes the calcium-dependent hydrolysis of the 2-acyl groups in 3-sn-phosphoglycerides. The chain is Basic phospholipase A2 PL-Y from Protobothrops flavoviridis (Habu).